The sequence spans 67 residues: Alpha-like toxin Lqh3 (67 aa).

Positions 2-66 (RDGYIAQPEN…GIIVEGEKCH (65 aa)) constitute an LCN-type CS-alpha/beta domain. Intrachain disulfides connect cysteine 12-cysteine 65, cysteine 16-cysteine 37, cysteine 23-cysteine 47, and cysteine 27-cysteine 49. Serine 67 is modified (serine amide).

This sequence belongs to the long (4 C-C) scorpion toxin superfamily. Sodium channel inhibitor family. Alpha subfamily. In terms of assembly, monomer. Expressed by the venom gland.

The protein resides in the secreted. Alpha toxins bind voltage-independently at site-3 of sodium channels (Nav) and inhibit the inactivation of the activated channels, thereby blocking neuronal transmission. The dissociation is voltage-dependent. This alpha-like toxin is highly toxic to insects and competes with LqhaIT on binding to insect sodium channels. Differs from classical anti-mammalian alpha-toxins as it inhibits sodium channel inactivation in cell bodies of hippocampus brain neurons, on which the anti-mammalian Lqh2 is inactive, and is unable to affect Nav1.2 in the rat brain, on which Lqh2 is highly active. Moreover, its pharmacological properties are unique in that its binding affinity for insect channels drops &gt;30-fold at pH 8.5 versus pH 6.5, and its rate of association with receptor site-3 on both insect and mammalian sodium channels is 4-15-fold slower compared with LqhaIT and Lqh2. The sequence is that of Alpha-like toxin Lqh3 from Leiurus hebraeus (Hebrew deathstalker scorpion).